A 64-amino-acid polypeptide reads, in one-letter code: Peptide Ctri9677 (64 aa).

A signal peptide spans 1 to 22 (MKNNTILFTFLIVFLIASQIEA). Leucine amide is present on L36. A propeptide spanning residues 40 to 64 (SEDREFFDFFTDDNLAALEKALKEY) is cleaved from the precursor.

The protein belongs to the non-disulfide-bridged peptide (NDBP) superfamily. Short antimicrobial peptide (group 4) family. As to expression, expressed by the venom gland.

The protein resides in the secreted. Functionally, antimicrobial peptide. The protein is Peptide Ctri9677 of Chaerilus tricostatus (Scorpion).